We begin with the raw amino-acid sequence, 407 residues long: MARPDLTARLHAQRALRDAQGRRRTRRTVTRRDGVRLEVDGQWLTGFCSNDYLGLAQQFSVVNALQDAAAREGAGAGASHLVCGHHAMHEALEREVAEWLGYPRALLFGSGFAANLAVQQALLSEENDVCVQDKLNHASLLDATRLAGARLRRYPHLDTEGAMRQLKHAPDGAAMLATDGVFSMDGDIAPLRALSLVARLQQALFYVDDAHGVGVVGDGRGAVAAAGLSVDDVPLQLVTLGKALGGSGALVLGRDDLIEHLAETARPYIYTTAVPPAMAAAALEAVRLARRDHWRRTKLTDLIALFRSEARRHGLDLMASETPIQPLLCGDDHTAVAMSTALEQAGWLVGAIRPPTVPEGKARLRVTLSALHTPEQVRGLVEAIANARDRVTLAVREAAPPPLPAFA.

Arg-24 lines the substrate pocket. 111–112 (GF) provides a ligand contact to pyridoxal 5'-phosphate. His-137 lines the substrate pocket. Ser-183, His-211, and Thr-239 together coordinate pyridoxal 5'-phosphate. At Lys-242 the chain carries N6-(pyridoxal phosphate)lysine. Position 356 (Thr-356) interacts with substrate.

Belongs to the class-II pyridoxal-phosphate-dependent aminotransferase family. BioF subfamily. Homodimer. Requires pyridoxal 5'-phosphate as cofactor.

The enzyme catalyses 6-carboxyhexanoyl-[ACP] + L-alanine + H(+) = (8S)-8-amino-7-oxononanoate + holo-[ACP] + CO2. The protein operates within cofactor biosynthesis; biotin biosynthesis. Functionally, catalyzes the decarboxylative condensation of pimeloyl-[acyl-carrier protein] and L-alanine to produce 8-amino-7-oxononanoate (AON), [acyl-carrier protein], and carbon dioxide. This Stenotrophomonas maltophilia (strain R551-3) protein is 8-amino-7-oxononanoate synthase.